We begin with the raw amino-acid sequence, 254 residues long: Type III pantothenate kinase (254 aa).

Asp6–Val13 contributes to the ATP binding site. Substrate is bound by residues Tyr100 and Gly107 to Arg110. Asp109 serves as the catalytic Proton acceptor. Residue Asp129 participates in K(+) binding. Thr132 contributes to the ATP binding site. A substrate-binding site is contributed by Thr184.

It belongs to the type III pantothenate kinase family. In terms of assembly, homodimer. NH4(+) is required as a cofactor. It depends on K(+) as a cofactor.

The protein localises to the cytoplasm. It carries out the reaction (R)-pantothenate + ATP = (R)-4'-phosphopantothenate + ADP + H(+). It functions in the pathway cofactor biosynthesis; coenzyme A biosynthesis; CoA from (R)-pantothenate: step 1/5. Functionally, catalyzes the phosphorylation of pantothenate (Pan), the first step in CoA biosynthesis. The polypeptide is Type III pantothenate kinase (Syntrophus aciditrophicus (strain SB)).